The chain runs to 651 residues: UvrABC system protein B (651 aa).

In terms of domain architecture, Helicase ATP-binding spans 25–178; the sequence is RGISCGAKEQ…CQLQERLVEL (154 aa). An ATP-binding site is contributed by 38–45; the sequence is GVTGSGKT. The short motif at 91–114 is the Beta-hairpin element; sequence YYDYYQPEAYIPQSDVYIEKDALI. A Helicase C-terminal domain is found at 427–591; that stretch reads DGQIHDVMCE…IVPRTIQKPV (165 aa). The interval 593–615 is disordered; sequence TSLSERVGSSRKKVSRDTNTDPA. The region spanning 616-651 is the UVR domain; sequence NRDIVELQKEMLLCAENLDFERAVEIRNEIKRLTAP.

This sequence belongs to the UvrB family. As to quaternary structure, forms a heterotetramer with UvrA during the search for lesions. Interacts with UvrC in an incision complex.

It localises to the cytoplasm. The UvrABC repair system catalyzes the recognition and processing of DNA lesions. A damage recognition complex composed of 2 UvrA and 2 UvrB subunits scans DNA for abnormalities. Upon binding of the UvrA(2)B(2) complex to a putative damaged site, the DNA wraps around one UvrB monomer. DNA wrap is dependent on ATP binding by UvrB and probably causes local melting of the DNA helix, facilitating insertion of UvrB beta-hairpin between the DNA strands. Then UvrB probes one DNA strand for the presence of a lesion. If a lesion is found the UvrA subunits dissociate and the UvrB-DNA preincision complex is formed. This complex is subsequently bound by UvrC and the second UvrB is released. If no lesion is found, the DNA wraps around the other UvrB subunit that will check the other stand for damage. The polypeptide is UvrABC system protein B (Anaplasma marginale (strain Florida)).